We begin with the raw amino-acid sequence, 396 residues long: MAKSKFERVKPHINVGTIGHVDHGKTTLTAAITTILTRKFGGEAKSYAQIDSAPEERARGITINTSHVEYETDKRHYAHVDCPGHADYVKNMITGAAQMDGAILVVSAADGPMPQTREHILLARQVGVPYIIVFMNKADMVDDAELLELVEMEIRELLSKYDFPGDDTPIIIGSALKALEGDKGDIGEAAILKLAEVLDSYIPEPQRAIDGAFIMPVEDVFSISGRGTVVTGRVERGIVKVGDEIEIVGLRPTIKTTCTGVEMFRKLLDQGQAGDNVGILLRGTKREEVERGQVLAKPGSILPHTKFSAEIYVLSKEEGGRHTPFFAGYRPQFYFRTTDVTGSIELPAGVEMVMPGDNISVNVNLIAPIAMSDGLRFAIREGGRTVGAGVVAKVIE.

Positions 10-206 constitute a tr-type G domain; that stretch reads KPHINVGTIG…VLDSYIPEPQ (197 aa). Positions 19-26 are G1; that stretch reads GHVDHGKT. Residue 19–26 coordinates GTP; the sequence is GHVDHGKT. Thr26 is a binding site for Mg(2+). The interval 60–64 is G2; the sequence is GITIN. The tract at residues 81 to 84 is G3; it reads DCPG. Residues 81 to 85 and 136 to 139 each bind GTP; these read DCPGH and NKAD. Residues 136–139 form a G4 region; that stretch reads NKAD. The G5 stretch occupies residues 174–176; it reads SAL.

It belongs to the TRAFAC class translation factor GTPase superfamily. Classic translation factor GTPase family. EF-Tu/EF-1A subfamily. As to quaternary structure, monomer.

It is found in the cytoplasm. It carries out the reaction GTP + H2O = GDP + phosphate + H(+). In terms of biological role, GTP hydrolase that promotes the GTP-dependent binding of aminoacyl-tRNA to the A-site of ribosomes during protein biosynthesis. The chain is Elongation factor Tu 2 from Nitrosomonas eutropha (strain DSM 101675 / C91 / Nm57).